The primary structure comprises 174 residues: ATP-dependent protease subunit HslV (174 aa).

Threonine 2 is an active-site residue. Residues glycine 157, cysteine 160, and threonine 163 each contribute to the Na(+) site.

Belongs to the peptidase T1B family. HslV subfamily. As to quaternary structure, a double ring-shaped homohexamer of HslV is capped on each side by a ring-shaped HslU homohexamer. The assembly of the HslU/HslV complex is dependent on binding of ATP.

The protein localises to the cytoplasm. The catalysed reaction is ATP-dependent cleavage of peptide bonds with broad specificity.. Allosterically activated by HslU binding. In terms of biological role, protease subunit of a proteasome-like degradation complex believed to be a general protein degrading machinery. This Shewanella pealeana (strain ATCC 700345 / ANG-SQ1) protein is ATP-dependent protease subunit HslV.